The chain runs to 472 residues: WD repeat-containing protein 88 (472 aa).

Residues 1-22 are disordered; sequence MASPPRCSPTAHDRECKLPPPS. 7 WD repeats span residues 100-139, 143-182, 184-224, 228-267, 271-310, 319-358, and 361-400; these read GHEH…VVRD, RPKA…LLWK, RYDT…TVSV, HHTR…TLLT, AHSN…FRNC, GHEG…RKLS, and GHND…EIPL. Positions 447 to 472 are disordered; the sequence is LPADTSSSSSSSERENSPPPRGSKDD. Residues 458–472 are compositionally biased toward basic and acidic residues; the sequence is SERENSPPPRGSKDD.

The sequence is that of WD repeat-containing protein 88 (WDR88) from Homo sapiens (Human).